The sequence spans 391 residues: Toluene efflux pump periplasmic linker protein TtgG (391 aa).

The signal sequence occupies residues 1-32; the sequence is MRAERWSQTVRQIRSPRALRVIPLTALMLISG. A lipid anchor (N-palmitoyl cysteine) is attached at C33. The S-diacylglycerol cysteine moiety is linked to residue C33. A coiled-coil region spans residues 107–136; that stretch reads RTYEAQLRRAEANRTSAQNLARRYETLLKT.

Belongs to the membrane fusion protein (MFP) (TC 8.A.1) family.

It is found in the cell inner membrane. In terms of biological role, the periplasmic linker component of an organic solvent efflux pump. Involved in export of a number of organic solvents, including toluene and styrene. This is the most important solvent efflux pump in this strain, although it can export AMP and some antibiotics. In Pseudomonas putida (strain DOT-T1E), this protein is Toluene efflux pump periplasmic linker protein TtgG (ttgG).